The chain runs to 205 residues: High frequency lysogenization protein HflD homolog (205 aa).

This sequence belongs to the HflD family.

Its subcellular location is the cytoplasm. It is found in the cell inner membrane. The sequence is that of High frequency lysogenization protein HflD homolog from Haemophilus influenzae (strain ATCC 51907 / DSM 11121 / KW20 / Rd).